A 103-amino-acid polypeptide reads, in one-letter code: Acyl-CoA-binding protein (103 aa).

The region spanning 18–103 (HQADFDEAAE…AKTMVEKYGI (86 aa)) is the ACB domain. Residues Lys30, 45–49 (YGFYK), Lys67, Lys71, and Tyr90 each bind an acyl-CoA.

This sequence belongs to the ACBP family. Monomer.

The protein localises to the endoplasmic reticulum. It localises to the golgi apparatus. In terms of biological role, binds medium- and long-chain acyl-CoA esters with very high affinity and may function as an intracellular carrier of acyl-CoA esters. It is also able to displace diazepam from the benzodiazepine (BZD) recognition site located on the GABA type A receptor. It is therefore possible that this protein also acts as a neuropeptide to modulate the action of the GABA receptor. The protein is Acyl-CoA-binding protein (DBI) of Anas platyrhynchos (Mallard).